Consider the following 192-residue polypeptide: MAAWGRRRLGPGSGGGGARERVSLSATDCYIVHEIYNGENAQDQFEYELEQALEAQYKYIVIEPTRIGDETARWITVGNCLHKTTVLAGTACLFTPLALPLDYSHYISLPAGVLSLACCTLYGISWQFDPCCKYQVEYDAYRLSRLPLHTLTSSTPVVLVRKDDLHRKRLHNTIALAALVYCVKKIYELCAV.

A disordered region spans residues 1–20 (MAAWGRRRLGPGSGGGGARE). 2 helical membrane passes run 84–100 (TTVL…LALP) and 107–124 (ISLP…LYGI).

This sequence belongs to the TMEM11 family. Associates with the mitochondrial contact site and cristae organizing system (MICOS) complex, composed of at least MICOS10/MIC10, CHCHD3/MIC19, CHCHD6/MIC25, APOOL/MIC27, IMMT/MIC60, APOO/MIC23/MIC26 and QIL1/MIC13. This complex was also known under the names MINOS or MitOS complex. The MICOS complex associates with mitochondrial outer membrane proteins SAMM50, MTX1, MTX2 and DNAJC11, mitochondrial inner membrane protein TMEM11 and with HSPA9. Interacts with IMMT/MIC60.

The protein localises to the mitochondrion inner membrane. Functionally, plays a role in mitochondrial morphogenesis. The protein is Transmembrane protein 11, mitochondrial (TMEM11) of Bos taurus (Bovine).